An 83-amino-acid chain; its full sequence is uncharacterized protein (83 aa).

Residues 58 to 80 (YWGYGAAYGISLGLIAGVALAGL) traverse the membrane as a helical segment.

The protein localises to the membrane. This is an uncharacterized protein from Bacillus subtilis (strain 168).